An 886-amino-acid chain; its full sequence is MAQPLVKKDDDHDDELEYSPFMGIEKGAVLQEARVFNDPQVDPRRCSQVITKLLYLLNQGESFTKVEATEVFFSVTKLFQSKDTGLRRMVYLIIKELSPSSDEVIIVTSSLMKDMNSKIDMYRANAIRVLCRIIDGTLLTQIERYLKQAIVDKNPVVSSAALVSGLHLLKTNPEIVKRWSNEVQEGIQSRSALVQFHALALLHQIRQNDRLAVSKLVGSLTRGSVRSPLAQCLLIRYTSQVIRDMANHGQSGERPFYEFLESCLRHKAEMVILEAARAITELDGVTSRELTPAITVLQLFLSSPRPVLRFAAVRTLNKVAMTHPMAVTNCNIDMESLISDQNRSIATLAITTLLKTGNESSVERLMKQITNFMSDIADEFKIVVVDAIRSLCVKFPLKYRSLMTFLSNILREEGGFEYKRAIVDSIVTIIRDIPDAKESGLLHLCEFIEDCEFTYLSTQILHFLGIEGPNTSDPSKYIRYIYNRVHLENATVRAAAVSTLAKFGFMVESLKPRITVLLKRCIYDSDDEVRDRATLYLSVLGGDGTVDTDKESKDFLFGSLEVPLVNMETSLKNYEPSEEAFDINSVPKEVKSQPLAEKKAQGKKPTGLGAPPAAPASGFDGYERLLSSIPEFAAFGKLFKSSLPVELTEAETEYAVNVVKHIFDSHVVFQYNCTNTIPEQLLERVNVIVDASEAEEFSEVTSKALNSLPYDSPGQAFVVFEKPAGVPAVGKFSNTLTFVVKEVDPSTGEAEDDGVEDEYQLEDLEVVAGDYMVKVGVSNFRNAWESMDEEDERVDEYGLGQRESLGEAVKAVMDLLGMQTCEGTETIPLNARSHTCLLSGVYIGNVKVLVRAQFGMDSSKDIAMKLTVRAEDVSVAEAIHEIVASG.

HEAT repeat units follow at residues 66 to 103 (VEAT…SSDE), 288 to 325 (RELT…THPM), 327 to 359 (VTNC…TGNE), 360 to 397 (SSVE…KFPL), and 472 to 509 (SDPS…MVES). The segment at 592 to 613 (SQPLAEKKAQGKKPTGLGAPPA) is disordered.

This sequence belongs to the COPG family. Oligomeric complex that consists of at least the alpha, beta, beta', gamma, delta, epsilon and zeta subunits.

It is found in the cytoplasm. The protein resides in the golgi apparatus membrane. It localises to the cytoplasmic vesicle. The protein localises to the COPI-coated vesicle membrane. Functionally, the coatomer is a cytosolic protein complex that binds to dilysine motifs and reversibly associates with Golgi non-clathrin-coated vesicles, which further mediate biosynthetic protein transport from the ER, via the Golgi up to the trans Golgi network. Coatomer complex is required for budding from Golgi membranes, and is essential for the retrograde Golgi-to-ER transport of dilysine-tagged proteins. The chain is Coatomer subunit gamma from Arabidopsis thaliana (Mouse-ear cress).